A 506-amino-acid polypeptide reads, in one-letter code: ATP synthase subunit alpha (506 aa).

Position 171–178 (171–178 (GDRQTGKT)) interacts with ATP.

The protein belongs to the ATPase alpha/beta chains family. As to quaternary structure, F-type ATPases have 2 components, CF(1) - the catalytic core - and CF(0) - the membrane proton channel. CF(1) has five subunits: alpha(3), beta(3), gamma(1), delta(1), epsilon(1). CF(0) has four main subunits: a, b, b' and c.

The protein localises to the cellular thylakoid membrane. The enzyme catalyses ATP + H2O + 4 H(+)(in) = ADP + phosphate + 5 H(+)(out). Produces ATP from ADP in the presence of a proton gradient across the membrane. The alpha chain is a regulatory subunit. The sequence is that of ATP synthase subunit alpha from Nostoc punctiforme (strain ATCC 29133 / PCC 73102).